The primary structure comprises 459 residues: Tubulin gamma chain (459 aa).

Residue 142–148 (AGGTGSG) coordinates GTP. The disordered stretch occupies residues 440–459 (ADYLTKETAPTDEAEDKRAG).

It belongs to the tubulin family.

The protein resides in the cytoplasm. Its subcellular location is the cytoskeleton. The protein localises to the microtubule organizing center. It localises to the spindle pole body. Functionally, tubulin is the major constituent of microtubules. The gamma chain is found at microtubule organizing centers (MTOC) such as the spindle poles or the centrosome, suggesting that it is involved in the minus-end nucleation of microtubule assembly. The protein is Tubulin gamma chain (TUB4) of Cochliobolus heterostrophus (strain C5 / ATCC 48332 / race O) (Southern corn leaf blight fungus).